Here is a 190-residue protein sequence, read N- to C-terminus: Glutathione peroxidase 2 (190 aa).

Residue Sec-40 is part of the active site. A non-standard amino acid (selenocysteine) is located at residue Sec-40.

It belongs to the glutathione peroxidase family. Homotetramer. Exclusively expressed in the stomach and small intestine.

The protein resides in the cytoplasm. It is found in the cytosol. It carries out the reaction 2 glutathione + H2O2 = glutathione disulfide + 2 H2O. The enzyme catalyses a hydroperoxy polyunsaturated fatty acid + 2 glutathione = a hydroxy polyunsaturated fatty acid + glutathione disulfide + H2O. The catalysed reaction is tert-butyl hydroperoxide + 2 glutathione = tert-butanol + glutathione disulfide + H2O. It catalyses the reaction cumene hydroperoxide + 2 glutathione = 2-phenylpropan-2-ol + glutathione disulfide + H2O. It carries out the reaction (13S)-hydroperoxy-(9Z,11E)-octadecadienoate + 2 glutathione = (13S)-hydroxy-(9Z,11E)-octadecadienoate + glutathione disulfide + H2O. The enzyme catalyses (5S)-hydroperoxy-(6E,8Z,11Z,14Z)-eicosatetraenoate + 2 glutathione = (5S)-hydroxy-(6E,8Z,11Z,14Z)-eicosatetraenoate + glutathione disulfide + H2O. The catalysed reaction is (12R)-hydroperoxy-(5Z,8Z,10E,14Z)-eicosatetraenoate + 2 glutathione = (12R)-hydroxy-(5Z,8Z,10E,14Z)-eicosatetraenoate + glutathione disulfide + H2O. It catalyses the reaction (15S)-hydroperoxy-(5Z,8Z,11Z,13E)-eicosatetraenoate + 2 glutathione = (15S)-hydroxy-(5Z,8Z,11Z,13E)-eicosatetraenoate + glutathione disulfide + H2O. Catalyzes the reduction of hydroperoxides in a glutathione-dependent manner thus regulating cellular redox homeostasis. Can reduce small soluble hydroperoxides such as H2O2, cumene hydroperoxide and tert-butyl hydroperoxide, as well as several fatty acid-derived hydroperoxides. Cannot reduce phosphatidycholine hydroperoxide. The protein is Glutathione peroxidase 2 (GPX2) of Macaca fuscata fuscata (Japanese macaque).